Consider the following 354-residue polypeptide: Uroporphyrinogen decarboxylase (354 aa).

Residues 30 to 34 (RQAGR), Asp-79, Tyr-154, Ser-209, and His-333 each bind substrate.

The protein belongs to the uroporphyrinogen decarboxylase family. As to quaternary structure, homodimer.

It is found in the cytoplasm. It carries out the reaction uroporphyrinogen III + 4 H(+) = coproporphyrinogen III + 4 CO2. Its pathway is porphyrin-containing compound metabolism; protoporphyrin-IX biosynthesis; coproporphyrinogen-III from 5-aminolevulinate: step 4/4. Its function is as follows. Catalyzes the decarboxylation of four acetate groups of uroporphyrinogen-III to yield coproporphyrinogen-III. The sequence is that of Uroporphyrinogen decarboxylase from Mycolicibacterium vanbaalenii (strain DSM 7251 / JCM 13017 / BCRC 16820 / KCTC 9966 / NRRL B-24157 / PYR-1) (Mycobacterium vanbaalenii).